Here is a 524-residue protein sequence, read N- to C-terminus: Homeobox protein engrailed-like SMOX-2 (524 aa).

Residues 194–218 form a disordered region; the sequence is SSSSSSSSSSSSSSSSSSCSTNSSS. A DNA-binding region (homeobox) is located at residues 423–482; it reads LKRPRTSFTVPQLKRLSQEFEKNRYLDELRRKKLATELDLRESQVKIWFQNKRAKTKKAS.

The protein belongs to the engrailed homeobox family.

It is found in the nucleus. The protein is Homeobox protein engrailed-like SMOX-2 (SMOX-2) of Schistosoma mansoni (Blood fluke).